The chain runs to 425 residues: tRNA(Ile)-lysidine synthase (425 aa).

27-32 (SGGLDS) lines the ATP pocket.

It belongs to the tRNA(Ile)-lysidine synthase family.

It localises to the cytoplasm. The catalysed reaction is cytidine(34) in tRNA(Ile2) + L-lysine + ATP = lysidine(34) in tRNA(Ile2) + AMP + diphosphate + H(+). Its function is as follows. Ligates lysine onto the cytidine present at position 34 of the AUA codon-specific tRNA(Ile) that contains the anticodon CAU, in an ATP-dependent manner. Cytidine is converted to lysidine, thus changing the amino acid specificity of the tRNA from methionine to isoleucine. The chain is tRNA(Ile)-lysidine synthase from Streptococcus pneumoniae (strain Hungary19A-6).